The sequence spans 335 residues: Biotin synthase (335 aa).

The Radical SAM core domain occupies 43–269 (YFGKKVKLNM…INPTKEIRIA (227 aa)). The [4Fe-4S] cluster site is built by Cys61, Cys65, and Cys68. [2Fe-2S] cluster contacts are provided by Cys104, Cys137, Cys197, and Arg267.

It belongs to the radical SAM superfamily. Biotin synthase family. In terms of assembly, homodimer. It depends on [4Fe-4S] cluster as a cofactor. Requires [2Fe-2S] cluster as cofactor.

It catalyses the reaction (4R,5S)-dethiobiotin + (sulfur carrier)-SH + 2 reduced [2Fe-2S]-[ferredoxin] + 2 S-adenosyl-L-methionine = (sulfur carrier)-H + biotin + 2 5'-deoxyadenosine + 2 L-methionine + 2 oxidized [2Fe-2S]-[ferredoxin]. It participates in cofactor biosynthesis; biotin biosynthesis; biotin from 7,8-diaminononanoate: step 2/2. Catalyzes the conversion of dethiobiotin (DTB) to biotin by the insertion of a sulfur atom into dethiobiotin via a radical-based mechanism. The chain is Biotin synthase from Staphylococcus aureus (strain USA300).